A 353-amino-acid chain; its full sequence is Ig alpha-1 chain C region (353 aa).

One can recognise an Ig-like 1 domain in the interval 6–98 (PKVFPLSLCS…HYTNPSQDVT (93 aa)). Disulfide bonds link C26-C85 and C77-C101. The segment at 96-121 (DVTVPCRVPSTPPTPSPSTPPTPSPP) is disordered. The span at 105 to 121 (STPPTPSPSTPPTPSPP) shows a compositional bias: pro residues. Disulfide bonds link C123/C180, C147/C204, and C250/C313. 2 Ig-like domains span residues 125–220 (PRLS…ATLS) and 228–330 (PEVH…KTID). A glycan (N-linked (GlcNAc...) asparagine) is linked at N144. N340 carries an N-linked (GlcNAc...) asparagine glycan. 3-hydroxy-L-kynurenine is bound at residue C352.

Monomeric or polymeric. Post-translationally, 3-Hydroxykynurenine, an oxidized tryptophan metabolite that is common in biological fluids, reacts with alpha-1-microglobulin to form heterogeneous polycyclic chromophores including hydroxanthommatin. The chromophore reacts with accessible cysteines forming non-reducible thioether cross-links with Ig alpha-1 chain C region Cys-352.

Ig alpha is the major immunoglobulin class in body secretions. It may serve both to defend against local infection and to prevent access of foreign antigens to the general immunologic system. The polypeptide is Ig alpha-1 chain C region (IGHA1) (Gorilla gorilla gorilla (Western lowland gorilla)).